The primary structure comprises 191 residues: Glutathione-dependent formaldehyde-activating enzyme (191 aa).

The 148-residue stretch at phenylalanine 22–aspartate 169 folds into the CENP-V/GFA domain. Cysteine 29, cysteine 31, cysteine 50, cysteine 52, cysteine 55, cysteine 97, and cysteine 100 together coordinate Zn(2+).

This sequence belongs to the Gfa family. Zn(2+) serves as cofactor.

The catalysed reaction is S-(hydroxymethyl)glutathione = glutathione + formaldehyde. Its pathway is one-carbon metabolism; formaldehyde degradation; formate from formaldehyde (glutathione route): step 1/3. Functionally, catalyzes the condensation of formaldehyde and glutathione to S-hydroxymethylglutathione. This chain is Glutathione-dependent formaldehyde-activating enzyme, found in Xanthomonas axonopodis pv. citri (strain 306).